The sequence spans 208 residues: Uracil phosphoribosyltransferase (208 aa).

Residues Arg78, Arg103, and 130–138 (DPMLATGGS) contribute to the 5-phospho-alpha-D-ribose 1-diphosphate site. Residues Ile193 and 198–200 (GDA) contribute to the uracil site. 5-phospho-alpha-D-ribose 1-diphosphate is bound at residue Asp199.

Belongs to the UPRTase family. Mg(2+) is required as a cofactor.

The catalysed reaction is UMP + diphosphate = 5-phospho-alpha-D-ribose 1-diphosphate + uracil. Its pathway is pyrimidine metabolism; UMP biosynthesis via salvage pathway; UMP from uracil: step 1/1. Its activity is regulated as follows. Allosterically activated by GTP. In terms of biological role, catalyzes the conversion of uracil and 5-phospho-alpha-D-ribose 1-diphosphate (PRPP) to UMP and diphosphate. In Haemophilus influenzae (strain PittEE), this protein is Uracil phosphoribosyltransferase.